The sequence spans 88 residues: Large ribosomal subunit protein bL31B (88 aa).

It belongs to the bacterial ribosomal protein bL31 family. Type B subfamily. Part of the 50S ribosomal subunit.

This is Large ribosomal subunit protein bL31B from Corynebacterium efficiens (strain DSM 44549 / YS-314 / AJ 12310 / JCM 11189 / NBRC 100395).